We begin with the raw amino-acid sequence, 85 residues long: MAHKKAGGSTRNGRDSEAKRLGVKRFGGETVLAGSIIVRQRGTKFHAGTNVGCGRDHTLFAKADGKVKFEVKGPNNRKYISIVAE.

The segment at 1-20 is disordered; sequence MAHKKAGGSTRNGRDSEAKR.

The protein belongs to the bacterial ribosomal protein bL27 family.

This is Large ribosomal subunit protein bL27 from Citrobacter koseri (strain ATCC BAA-895 / CDC 4225-83 / SGSC4696).